Here is a 165-residue protein sequence, read N- to C-terminus: Sporulation thiol-disulfide oxidoreductase A (165 aa).

The first 26 residues, 1–26, serve as a signal peptide directing secretion; the sequence is MLTKRLLTIYIMLLGLIAWFPGAAQA. The region spanning 27–165 is the Thioredoxin domain; it reads EEKQPAVPAV…AEQLKEWTEE (139 aa). A disulfide bond links Cys65 and Cys68.

It belongs to the thioredoxin family.

The protein resides in the spore outer membrane. Thiol-disulfide oxidoreductase with a reductive function, involved in spore cortex synthesis. It could be involved either in breaking disulfide bonds in cortex components or in proteins that are important for cortex synthesis, or in thiol/disulfide bond interchange. In Bacillus subtilis (strain 168), this protein is Sporulation thiol-disulfide oxidoreductase A (stoA).